Here is a 310-residue protein sequence, read N- to C-terminus: Basic salivary proline-rich protein 4 (310 aa).

The N-terminal stretch at 1-16 (MLLILLSVALLALSSA) is a signal peptide. The disordered stretch occupies residues 14–310 (SSAESSSEDV…RPAQGQQPPQ (297 aa)). A run of 9 repeats spans residues 35 to 55 (KPEG…PPPG), 56 to 76 (KPQG…PPPG), 77 to 97 (KPEG…PHPG), 98 to 118 (KPER…PHPG), 119 to 139 (KPES…PTPG), 140 to 160 (KPEG…PPPG), 161 to 181 (KPEG…PHPG), 182 to 202 (KPER…PPPG), and 203 to 223 (KPER…PHPG). A 9.5 X 21 AA tandem repeats of K-P-[EQ]-[GR]-[PR]-[PR]-P-Q-G-G-N-Q-[PS]-[QH]-[RG]-[PT]-P-P-[PH]-P-G region spans residues 35 to 234 (KPEGRRPQGG…PEGPPPQEGN (200 aa)). The span at 48–63 (QRPPPPPGKPQGPPPQ) shows a compositional bias: pro residues. 3 N-linked (GlcNAc...) asparagine glycosylation sites follow: Asn66, Asn87, and Asn108. Residues 133 to 147 (GPPPTPGKPEGPPPQ) show a composition bias toward pro residues. Asn150, Asn171, and Asn192 each carry an N-linked (GlcNAc...) asparagine glycan. A compositionally biased stretch (pro residues) spans 196–210 (RPPPPPGKPERPPPQ). N-linked (GlcNAc...) asparagine glycosylation occurs at Asn213. The segment covering 217-231 (GPPPHPGKPEGPPPQ) has biased composition (pro residues). The stretch at 224–234 (KPEGPPPQEGN) is one 10; truncated repeat. Residue Asn234 is glycosylated (N-linked (GlcNAc...) asparagine). Positions 258-310 (QGPPPPGKPQGPPPAGGNPQQPQAPPAGKPQGPPPPPQGGRPPRPAQGQQPPQ) are enriched in pro residues.

Post-translationally, N-glycosylated. Proteolytically cleaved at the tripeptide Xaa-Pro-Gln, where Xaa in the P(3) position is mostly lysine. The endoprotease may be of microbial origin. Pyroglutamate formation found on at least Gln-46, Gln-48, Gln-67, Gln-88; Gln-90; Gln-193; Gln-288 Gln-214 and Gln-295, preferentially in diabetic, and head and neck cancer patients.

It is found in the secreted. This is Basic salivary proline-rich protein 4 (PRB4) from Homo sapiens (Human).